The primary structure comprises 326 residues: Gamma-resorcylate decarboxylase (326 aa).

Residues E8, H10, H164, and D287 each contribute to the Mn(2+) site. D287 is an active-site residue.

This sequence belongs to the metallo-dependent hydrolases superfamily. ACMSD family. In terms of assembly, homotetramer. Mn(2+) is required as a cofactor.

It carries out the reaction 2,6-dihydroxybenzoate + H(+) = resorcinol + CO2. It catalyses the reaction 2,3-dihydroxybenzoate + H(+) = catechol + CO2. It functions in the pathway aromatic compound metabolism. Its activity is regulated as follows. Activity is inhibited by 2-nitroresorcinol (2-NR). In terms of biological role, involved in the gamma-resorcylate (2,6-dihydroxybenzoate) catabolism. Catalyzes the reversible decarboxylation of gamma-resorcylate to resorcinol. Also catalyzes the decarboxylation of 2,3-dihydroxybenzoate to catechol, 2,4,6-trihydroxybenzoate to benzene-1,3,5-triol, and 2,6-dihydroxy-4-methylbenzoate to 5-methylbenzene-1,3-diol. This is Gamma-resorcylate decarboxylase from Polaromonas sp. (strain JS666 / ATCC BAA-500).